The chain runs to 504 residues: Probable alpha-L-arabinofuranosidase C (504 aa).

N-linked (GlcNAc...) asparagine glycans are attached at residues Asn-152, Asn-181, and Asn-269.

Belongs to the glycosyl hydrolase 51 family.

The protein localises to the secreted. The catalysed reaction is Hydrolysis of terminal non-reducing alpha-L-arabinofuranoside residues in alpha-L-arabinosides.. The protein operates within glycan metabolism; L-arabinan degradation. Its function is as follows. Alpha-L-arabinofuranosidase involved in the degradation of arabinoxylan, a major component of plant hemicellulose. Acts only on small linear 1,5-alpha-linked L-arabinofuranosyl oligosaccharides. The protein is Probable alpha-L-arabinofuranosidase C (abfC) of Aspergillus flavus (strain ATCC 200026 / FGSC A1120 / IAM 13836 / NRRL 3357 / JCM 12722 / SRRC 167).